Here is a 100-residue protein sequence, read N- to C-terminus: Integration host factor subunit alpha (100 aa).

The protein belongs to the bacterial histone-like protein family. In terms of assembly, heterodimer of an alpha and a beta chain.

Its function is as follows. This protein is one of the two subunits of integration host factor, a specific DNA-binding protein that functions in genetic recombination as well as in transcriptional and translational control. In Ruegeria sp. (strain TM1040) (Silicibacter sp.), this protein is Integration host factor subunit alpha.